We begin with the raw amino-acid sequence, 361 residues long: Neuronal-specific septin-3 (361 aa).

Residues 1-46 are disordered; sequence MSEIVPPEVRPKPAVPAKPSHVAPPSSAPFVPSPQGTGGEGQGSGR. The span at 15–34 shows a compositional bias: low complexity; the sequence is VPAKPSHVAPPSSAPFVPSP. Residues 36 to 46 are compositionally biased toward gly residues; sequence GTGGEGQGSGR. In terms of domain architecture, Septin-type G spans 70 to 342; that stretch reads AGFDFNIMVV…ETYRAKRLND (273 aa). Positions 80–87 are G1 motif; sequence GQSGLGKS. Residues 80-87 and threonine 114 contribute to the GTP site; that span reads GQSGLGKS. Residues 137 to 140 are G3 motif; that stretch reads DTPG. Residues 219 to 222 are G4 motif; sequence AKSD. Residues 220 to 228, glycine 276, and arginine 291 contribute to the GTP site; that span reads KSDTLTPEE. The segment at 341 to 361 is disordered; sequence NDNGGLHPISSSGHDTQESNL. A compositionally biased stretch (polar residues) spans 349 to 361; sequence ISSSGHDTQESNL.

Belongs to the TRAFAC class TrmE-Era-EngA-EngB-Septin-like GTPase superfamily. Septin GTPase family.

It localises to the cytoplasm. In terms of biological role, may be involved in cytokinesis. The protein is Neuronal-specific septin-3 of Danio rerio (Zebrafish).